The chain runs to 387 residues: uncharacterized protein (387 aa).

Residues 5–25 form a helical membrane-spanning segment; it reads FVLFSFPFLLLSSMLIFYQTT.

The protein belongs to the LicD transferase family.

The protein resides in the membrane. This is an uncharacterized protein from Caenorhabditis elegans.